The chain runs to 771 residues: Ribonucleoside-diphosphate reductase large subunit (771 aa).

The region spanning 1–92 (MFVIKRNGYK…VSNLHKETKK (92 aa)) is the ATP-cone domain. ATP-binding positions include 5–6 (KR), 11–17 (ENVMFDK), threonine 53, aspartate 57, and lysine 88. GDP-binding residues include serine 202 and serine 217. Residues 226-228 (DSI), lysine 243, and arginine 256 contribute to the dTTP site. Asparagine 427 is a GDP binding site. Residue asparagine 427 is the Proton acceptor of the active site. The active-site Cysteine radical intermediate is cysteine 429. Residues glutamate 431 and 603 to 606 (TAST) each bind GDP. The Proton acceptor role is filled by glutamate 431.

Belongs to the ribonucleoside diphosphate reductase large chain family. In terms of assembly, interacts with RNR2/OPG047 subunit. Requires Mg(2+) as cofactor.

The catalysed reaction is a 2'-deoxyribonucleoside 5'-diphosphate + [thioredoxin]-disulfide + H2O = a ribonucleoside 5'-diphosphate + [thioredoxin]-dithiol. Functionally, ribonucleoside-diphosphate reductase holoenzyme provides the precursors necessary for viral DNA synthesis. Allows virus growth in non-dividing cells. Catalyzes the biosynthesis of deoxyribonucleotides from the corresponding ribonucleotides. The chain is Ribonucleoside-diphosphate reductase large subunit (OPG080) from Homo sapiens (Human).